The chain runs to 177 residues: Secretion monitor (177 aa).

Residues 1–30 (MIGILNRWRQFGRRYFWPHLLLGMVAASLG) form the signal peptide.

The protein belongs to the SecM family.

The protein resides in the cytoplasm. It is found in the cytosol. Its subcellular location is the periplasm. In terms of biological role, regulates secA expression by translational coupling of the secM secA operon. Translational pausing at a specific Pro residue 5 residues before the end of the protein may allow disruption of a mRNA repressor helix that normally suppresses secA translation initiation. In Yersinia enterocolitica serotype O:8 / biotype 1B (strain NCTC 13174 / 8081), this protein is Secretion monitor.